We begin with the raw amino-acid sequence, 382 residues long: RNA exonuclease 3 (382 aa).

An Exonuclease domain is found at Val223–Val369.

It belongs to the REXO1/REXO3 family.

Its subcellular location is the cytoplasm. It is found in the nucleus. Functionally, 3' to 5' exoribonuclease required for proper 3' end maturation of MRP RNA and of the U5L snRNA. In Eremothecium gossypii (strain ATCC 10895 / CBS 109.51 / FGSC 9923 / NRRL Y-1056) (Yeast), this protein is RNA exonuclease 3 (REX3).